The chain runs to 306 residues: 1-aminocyclopropane-1-carboxylate oxidase (306 aa).

Residues 153 to 253 (PFFGTKVSHY…RRSIASFYNP (101 aa)) enclose the Fe2OG dioxygenase domain. H177, D179, and H234 together coordinate Fe cation.

It belongs to the iron/ascorbate-dependent oxidoreductase family. Requires Fe cation as cofactor.

The enzyme catalyses 1-aminocyclopropane-1-carboxylate + L-ascorbate + O2 = ethene + L-dehydroascorbate + hydrogen cyanide + CO2 + 2 H2O. The protein operates within alkene biosynthesis; ethylene biosynthesis via S-adenosyl-L-methionine; ethylene from S-adenosyl-L-methionine: step 2/2. In Musa acuminata (Banana), this protein is 1-aminocyclopropane-1-carboxylate oxidase (MAO1B).